The sequence spans 88 residues: Small ribosomal subunit protein bS16 (88 aa).

This sequence belongs to the bacterial ribosomal protein bS16 family.

The protein is Small ribosomal subunit protein bS16 of Staphylococcus saprophyticus subsp. saprophyticus (strain ATCC 15305 / DSM 20229 / NCIMB 8711 / NCTC 7292 / S-41).